Here is a 672-residue protein sequence, read N- to C-terminus: DNA ligase (672 aa).

Residues 37–41 (DAEYD), 86–87 (SL), and E115 contribute to the NAD(+) site. The N6-AMP-lysine intermediate role is filled by K117. Residues R138, E172, K288, and K312 each coordinate NAD(+). Zn(2+) is bound by residues C406, C409, C424, and C429. A BRCT domain is found at 590–672 (DISSTFAGKT…LQEIQQSKQV (83 aa)).

Belongs to the NAD-dependent DNA ligase family. LigA subfamily. Mg(2+) serves as cofactor. Requires Mn(2+) as cofactor.

The catalysed reaction is NAD(+) + (deoxyribonucleotide)n-3'-hydroxyl + 5'-phospho-(deoxyribonucleotide)m = (deoxyribonucleotide)n+m + AMP + beta-nicotinamide D-nucleotide.. Its function is as follows. DNA ligase that catalyzes the formation of phosphodiester linkages between 5'-phosphoryl and 3'-hydroxyl groups in double-stranded DNA using NAD as a coenzyme and as the energy source for the reaction. It is essential for DNA replication and repair of damaged DNA. The polypeptide is DNA ligase (Anoxybacillus flavithermus (strain DSM 21510 / WK1)).